A 363-amino-acid chain; its full sequence is MKKKFRIAVLPGDGIGPEVMREAYKILNILERKFFLKLELREFDIGGIAIDREGIALPEKTLRGCENSDAILFGSVGGKKWDYLPIESRPERASLLPLRKHFNLFSNLRPAKLRVDLKNLSPLRSDIVRDGFDILCIRELTGGIYFGKPKGRFKNKNGEYAFDTEIYYDFEIERIANLAFELASSRRCKVCSIDKANVLESSVLWREIVKKVSKNYPDVHLSHLYIDNACMQIIKNPTQFDILLCSNIFGDIISDECAMITGSIGMLPSASLNNQKFGLYEPAGGSAPDIEGKNIANPIAQILSLSMLIRYSMNLNEIADKIDLSVHYALKEGYRTLDISDGKNYIKTNEMGDIIAEFLDNGK.

78 to 91 is a binding site for NAD(+); that stretch reads GKKWDYLPIESRPE. The substrate site is built by arginine 99, arginine 109, arginine 138, and aspartate 227. The Mg(2+) site is built by aspartate 227, aspartate 251, and aspartate 255. 285–297 lines the NAD(+) pocket; sequence GSAPDIEGKNIAN.

It belongs to the isocitrate and isopropylmalate dehydrogenases family. LeuB type 1 subfamily. In terms of assembly, homodimer. Requires Mg(2+) as cofactor. Mn(2+) serves as cofactor.

It is found in the cytoplasm. The catalysed reaction is (2R,3S)-3-isopropylmalate + NAD(+) = 4-methyl-2-oxopentanoate + CO2 + NADH. Its pathway is amino-acid biosynthesis; L-leucine biosynthesis; L-leucine from 3-methyl-2-oxobutanoate: step 3/4. Catalyzes the oxidation of 3-carboxy-2-hydroxy-4-methylpentanoate (3-isopropylmalate) to 3-carboxy-4-methyl-2-oxopentanoate. The product decarboxylates to 4-methyl-2 oxopentanoate. This is 3-isopropylmalate dehydrogenase from Buchnera aphidicola subsp. Schizaphis graminum (strain Sg).